The sequence spans 225 residues: Putative adhesin RT0816 (225 aa).

A signal peptide spans 1-22 (MKKLLLIAATSATILSSSISFA).

In Rickettsia typhi (strain ATCC VR-144 / Wilmington), this protein is Putative adhesin RT0816.